Consider the following 228-residue polypeptide: Serum amyloid P-component (228 aa).

Residues 1–20 (MDKLLLWMSVFTSLLSEAFA) form the signal peptide. Positions 25-224 (NQKVFVFPRE…YVVIKPRMWD (200 aa)) constitute a Pentraxin (PTX) domain. Asn52 is a glycosylation site (N-linked (GlcNAc...) asparagine). An intrachain disulfide couples Cys56 to Cys115. Ca(2+)-binding residues include Asp78, Asn79, Glu156, Gln157, Asp158, and Gln168.

The protein belongs to the pentraxin family. Homopentamer. Pentraxin (or pentaxin) have a discoid arrangement of 5 non-covalently bound subunits. Requires Ca(2+) as cofactor.

The protein resides in the secreted. This chain is Serum amyloid P-component (Apcs), found in Rattus norvegicus (Rat).